A 34-amino-acid chain; its full sequence is Photosystem II reaction center protein M (34 aa).

The chain crosses the membrane as a helical span at residues Ile5–Ile25.

This sequence belongs to the PsbM family. In terms of assembly, PSII is composed of 1 copy each of membrane proteins PsbA, PsbB, PsbC, PsbD, PsbE, PsbF, PsbH, PsbI, PsbJ, PsbK, PsbL, PsbM, PsbT, PsbX, PsbY, PsbZ, Psb30/Ycf12, at least 3 peripheral proteins of the oxygen-evolving complex and a large number of cofactors. It forms dimeric complexes.

It is found in the plastid. The protein localises to the chloroplast thylakoid membrane. In terms of biological role, one of the components of the core complex of photosystem II (PSII). PSII is a light-driven water:plastoquinone oxidoreductase that uses light energy to abstract electrons from H(2)O, generating O(2) and a proton gradient subsequently used for ATP formation. It consists of a core antenna complex that captures photons, and an electron transfer chain that converts photonic excitation into a charge separation. This subunit is found at the monomer-monomer interface. This chain is Photosystem II reaction center protein M, found in Welwitschia mirabilis (Tree tumbo).